A 356-amino-acid polypeptide reads, in one-letter code: Ion-translocating oxidoreductase complex subunit D (356 aa).

Transmembrane regions (helical) follow at residues 20-40, 42-62, 68-88, and 117-137; these read LMLLVVYATIPGMFTMTWFFG, GVLVNVLLASISCMLFEALAI, PVGFYLRDFSALVTGVLIGVS, and GFNPFNPAMVAYALLLVSFPV. Thr-177 bears the FMN phosphoryl threonine mark. 5 helical membrane-spanning segments follow: residues 205–225, 229–249, 259–279, 292–312, and 315–335; these read WASAGWEWVNIAFLFGGLYLL, VYTWHAPVSMLLALALMAALF, GSPLFHLLTGATMLGAFFIVT, VIYGALIGMLVYVIRTWGSSY, and GVAFAVLLMNFAAPFIDYYTT.

It belongs to the NqrB/RnfD family. In terms of assembly, the complex is composed of six subunits: RnfA, RnfB, RnfC, RnfD, RnfE and RnfG. FMN is required as a cofactor.

The protein resides in the cell inner membrane. Functionally, part of a membrane-bound complex that couples electron transfer with translocation of ions across the membrane. This is Ion-translocating oxidoreductase complex subunit D from Cellvibrio japonicus (strain Ueda107) (Pseudomonas fluorescens subsp. cellulosa).